Here is a 130-residue protein sequence, read N- to C-terminus: S-adenosylmethionine decarboxylase proenzyme (130 aa).

The active-site Schiff-base intermediate with substrate; via pyruvic acid is Ser63. The residue at position 63 (Ser63) is a Pyruvic acid (Ser); by autocatalysis. The Proton acceptor; for processing activity role is filled by His68. Residue Cys83 is the Proton donor; for catalytic activity of the active site.

The protein belongs to the prokaryotic AdoMetDC family. Type 1 subfamily. As to quaternary structure, heterotetramer of two alpha and two beta chains arranged as a dimer of alpha/beta heterodimers. Pyruvate is required as a cofactor. In terms of processing, is synthesized initially as an inactive proenzyme. Formation of the active enzyme involves a self-maturation process in which the active site pyruvoyl group is generated from an internal serine residue via an autocatalytic post-translational modification. Two non-identical subunits are generated from the proenzyme in this reaction, and the pyruvate is formed at the N-terminus of the alpha chain, which is derived from the carboxyl end of the proenzyme. The post-translation cleavage follows an unusual pathway, termed non-hydrolytic serinolysis, in which the side chain hydroxyl group of the serine supplies its oxygen atom to form the C-terminus of the beta chain, while the remainder of the serine residue undergoes an oxidative deamination to produce ammonia and the pyruvoyl group blocking the N-terminus of the alpha chain.

It carries out the reaction S-adenosyl-L-methionine + H(+) = S-adenosyl 3-(methylsulfanyl)propylamine + CO2. Its pathway is amine and polyamine biosynthesis; S-adenosylmethioninamine biosynthesis; S-adenosylmethioninamine from S-adenosyl-L-methionine: step 1/1. Its function is as follows. Catalyzes the decarboxylation of S-adenosylmethionine to S-adenosylmethioninamine (dcAdoMet), the propylamine donor required for the synthesis of the polyamines spermine and spermidine from the diamine putrescine. The sequence is that of S-adenosylmethionine decarboxylase proenzyme from Thermotoga petrophila (strain ATCC BAA-488 / DSM 13995 / JCM 10881 / RKU-1).